The sequence spans 83 residues: Cytochrome b559 subunit alpha (83 aa).

Residues 21–35 (VIHSITIPSLFIAGW) form a helical membrane-spanning segment. A heme-binding site is contributed by H23.

This sequence belongs to the PsbE/PsbF family. In terms of assembly, heterodimer of an alpha subunit and a beta subunit. PSII is composed of 1 copy each of membrane proteins PsbA, PsbB, PsbC, PsbD, PsbE, PsbF, PsbH, PsbI, PsbJ, PsbK, PsbL, PsbM, PsbT, PsbX, PsbY, PsbZ, Psb30/Ycf12, at least 3 peripheral proteins of the oxygen-evolving complex and a large number of cofactors. It forms dimeric complexes. The cofactor is heme b.

It is found in the plastid. It localises to the chloroplast thylakoid membrane. In terms of biological role, this b-type cytochrome is tightly associated with the reaction center of photosystem II (PSII). PSII is a light-driven water:plastoquinone oxidoreductase that uses light energy to abstract electrons from H(2)O, generating O(2) and a proton gradient subsequently used for ATP formation. It consists of a core antenna complex that captures photons, and an electron transfer chain that converts photonic excitation into a charge separation. The chain is Cytochrome b559 subunit alpha from Piper cenocladum (Ant piper).